Here is a 154-residue protein sequence, read N- to C-terminus: Aspartate carbamoyltransferase regulatory chain (154 aa).

Positions 109, 114, 138, and 141 each coordinate Zn(2+).

The protein belongs to the PyrI family. In terms of assembly, contains catalytic and regulatory chains. The cofactor is Zn(2+).

Functionally, involved in allosteric regulation of aspartate carbamoyltransferase. The polypeptide is Aspartate carbamoyltransferase regulatory chain (Aliivibrio salmonicida (strain LFI1238) (Vibrio salmonicida (strain LFI1238))).